We begin with the raw amino-acid sequence, 326 residues long: N-acetyl-gamma-glutamyl-phosphate reductase (326 aa).

Cys155 is an active-site residue.

This sequence belongs to the NAGSA dehydrogenase family. Type 1 subfamily.

The protein localises to the cytoplasm. It catalyses the reaction N-acetyl-L-glutamate 5-semialdehyde + phosphate + NADP(+) = N-acetyl-L-glutamyl 5-phosphate + NADPH + H(+). It participates in amino-acid biosynthesis; L-arginine biosynthesis; N(2)-acetyl-L-ornithine from L-glutamate: step 3/4. Catalyzes the NADPH-dependent reduction of N-acetyl-5-glutamyl phosphate to yield N-acetyl-L-glutamate 5-semialdehyde. The protein is N-acetyl-gamma-glutamyl-phosphate reductase of Shewanella baltica (strain OS195).